Reading from the N-terminus, the 329-residue chain is Pantothenate kinase (329 aa).

The segment at 1–22 is disordered; that stretch reads MPAQGPSHGELPPADAGRESSP. Residue 107–114 coordinates ATP; it reads GSVAVGKS.

It belongs to the prokaryotic pantothenate kinase family.

It is found in the cytoplasm. It catalyses the reaction (R)-pantothenate + ATP = (R)-4'-phosphopantothenate + ADP + H(+). It functions in the pathway cofactor biosynthesis; coenzyme A biosynthesis; CoA from (R)-pantothenate: step 1/5. The sequence is that of Pantothenate kinase from Nocardioides sp. (strain ATCC BAA-499 / JS614).